The chain runs to 389 residues: Putative RNA methyltransferase R405 (389 aa).

S-adenosyl-L-methionine is bound by residues glutamine 207, aspartate 261, and aspartate 314. Cysteine 342 serves as the catalytic Nucleophile.

This sequence belongs to the class I-like SAM-binding methyltransferase superfamily. RNA M5U methyltransferase family.

This chain is Putative RNA methyltransferase R405, found in Acanthamoeba polyphaga (Amoeba).